A 695-amino-acid polypeptide reads, in one-letter code: Threonine--tRNA ligase (695 aa).

Residues M1–A66 form the TGS domain. The segment at D263–P569 is catalytic. C368, H419, and H546 together coordinate Zn(2+).

It belongs to the class-II aminoacyl-tRNA synthetase family. As to quaternary structure, homodimer. The cofactor is Zn(2+).

The protein localises to the cytoplasm. It carries out the reaction tRNA(Thr) + L-threonine + ATP = L-threonyl-tRNA(Thr) + AMP + diphosphate + H(+). Functionally, catalyzes the attachment of threonine to tRNA(Thr) in a two-step reaction: L-threonine is first activated by ATP to form Thr-AMP and then transferred to the acceptor end of tRNA(Thr). Also edits incorrectly charged L-seryl-tRNA(Thr). The protein is Threonine--tRNA ligase of Mycolicibacterium gilvum (strain PYR-GCK) (Mycobacterium gilvum (strain PYR-GCK)).